Here is a 167-residue protein sequence, read N- to C-terminus: uncharacterized protein (167 aa).

A disordered region spans residues Ser115 to Lys167.

This is an uncharacterized protein from Homo sapiens (Human).